The primary structure comprises 481 residues: Cysteine--tRNA ligase (481 aa).

Cys29 serves as a coordination point for Zn(2+). The 'HIGH' region signature appears at 31-41 (VTVYDHCHIGH). Zn(2+) is bound by residues Cys209, His234, and Glu238. A 'KMSKS' region motif is present at residues 266 to 270 (KMSKS). Lys269 serves as a coordination point for ATP.

This sequence belongs to the class-I aminoacyl-tRNA synthetase family. In terms of assembly, monomer. It depends on Zn(2+) as a cofactor.

It localises to the cytoplasm. It catalyses the reaction tRNA(Cys) + L-cysteine + ATP = L-cysteinyl-tRNA(Cys) + AMP + diphosphate. The chain is Cysteine--tRNA ligase from Geobacter sulfurreducens (strain ATCC 51573 / DSM 12127 / PCA).